The following is a 346-amino-acid chain: Very-long-chain 3-oxoacyl-CoA reductase (346 aa).

The chain crosses the membrane as a helical span at residues 19 to 39; the sequence is LIYGVLFVGVYKITTFTLSVG. Residues V65, D119, N146, Y220, K224, V253, and S255 each contribute to the NADP(+) site. Residue Y220 is the Proton donor of the active site. K224 (lowers pKa of active site Tyr) is an active-site residue.

The protein belongs to the short-chain dehydrogenases/reductases (SDR) family.

It localises to the endoplasmic reticulum membrane. The catalysed reaction is a very-long-chain (3R)-3-hydroxyacyl-CoA + NADP(+) = a very-long-chain 3-oxoacyl-CoA + NADPH + H(+). The protein operates within lipid metabolism; fatty acid biosynthesis. In terms of biological role, component of the microsomal membrane bound fatty acid elongation system, which produces the 26-carbon very long-chain fatty acids (VLCFA) from palmitate. Catalyzes the reduction of the 3-ketoacyl-CoA intermediate that is formed in each cycle of fatty acid elongation. VLCFAs serve as precursors for ceramide and sphingolipids. The sequence is that of Very-long-chain 3-oxoacyl-CoA reductase from Debaryomyces hansenii (strain ATCC 36239 / CBS 767 / BCRC 21394 / JCM 1990 / NBRC 0083 / IGC 2968) (Yeast).